A 300-amino-acid polypeptide reads, in one-letter code: 33 kDa chaperonin (300 aa).

2 disulfides stabilise this stretch: Cys-247–Cys-249 and Cys-280–Cys-283.

This sequence belongs to the HSP33 family. In terms of processing, under oxidizing conditions two disulfide bonds are formed involving the reactive cysteines. Under reducing conditions zinc is bound to the reactive cysteines and the protein is inactive.

The protein localises to the cytoplasm. Its function is as follows. Redox regulated molecular chaperone. Protects both thermally unfolding and oxidatively damaged proteins from irreversible aggregation. Plays an important role in the bacterial defense system toward oxidative stress. The protein is 33 kDa chaperonin of Prochlorococcus marinus (strain MIT 9312).